The chain runs to 2273 residues: Acetyl-CoA carboxylase, mitochondrial (2273 aa).

A mitochondrion-targeting transit peptide spans 1-104 (KGKTITHGQS…RGNIHKHTRL (104 aa)). Residues 134–635 (VISKILIANN…STGWLDDLIL (502 aa)) form the Biotin carboxylation domain. Residues 292–484 (KTNFVSVPDD…LPATQLQIAM (193 aa)) form the ATP-grasp domain. 332 to 337 (GGGGKG) contributes to the ATP binding site. The active site involves Arg-459. Positions 763–837 (LEAELNPTQV…EAGDVIAKLT (75 aa)) constitute a Biotinyl-binding domain. Lys-804 is modified (N6-biotinyllysine). Residues 1532–1867 (PYSVKDWLQP…KRDMSPPLLE (336 aa)) enclose the CoA carboxyltransferase N-terminal domain. The segment at 1532–2187 (PYSVKDWLQP…EGQVIKRLQK (656 aa)) is carboxyltransferase. The CoA site is built by Arg-1776, Lys-2080, and Arg-2082. Residues 1871–2187 (RWDRDVDFKP…EGQVIKRLQK (317 aa)) form the CoA carboxyltransferase C-terminal domain.

It depends on biotin as a cofactor.

The protein resides in the mitochondrion. The catalysed reaction is hydrogencarbonate + acetyl-CoA + ATP = malonyl-CoA + ADP + phosphate + H(+). It catalyses the reaction N(6)-biotinyl-L-lysyl-[protein] + hydrogencarbonate + ATP = N(6)-carboxybiotinyl-L-lysyl-[protein] + ADP + phosphate + H(+). The protein operates within lipid metabolism; malonyl-CoA biosynthesis; malonyl-CoA from acetyl-CoA: step 1/1. Its function is as follows. Catalyzes the rate-limiting reaction in the mitochondrial fatty acid synthesis (FAS) type II pathway. Responsible for the production of the mitochondrial malonyl-CoA, used for the biosynthesis of the cofactor lipoic acid. This protein carries three functions: biotin carboxyl carrier protein, biotin carboxylase, and carboxyltransferase. This Saccharomyces cerevisiae (strain RM11-1a) (Baker's yeast) protein is Acetyl-CoA carboxylase, mitochondrial (HFA1).